The sequence spans 418 residues: MTLLALGINHKTAPVSLRERVSFSPDKLDQALDSLLAQPMVQGGVVLSTCNRTELYLSVEERDDLQEALIRWLCDYHNLNEDDLRNSLYWHQDNDAVSHLMRVASGLDSLVLGEPQILGQVKKAFADSQKGHMKASELERMFQKSFSVAKRVRTETDIGASAVSVAFAACTLARQIFESLSTVTVLLVGAGETIELVARHLREHKVQKMIIANRTRERAQILADEVGAEVIALSDIDERLREADIIISSTASPLPIIGKGMVERALKSRRNQPMLLVDIAVPRDVEPEVGKLANAYLYSVDDLQSIISHNLAQRKAAAVEAETIVAQEASEFMAWLRAQSASETIRDYRSQAEHVRDELTAKALAALEQGGDAQAIMQDLAWKLTNRLIHAPTKSLQQAARDGDNERLNILRDSLGLE.

Substrate-binding positions include 49–52, S109, 114–116, and Q120; these read TCNR and EPQ. C50 acts as the Nucleophile in catalysis. Residue 189–194 participates in NADP(+) binding; it reads GAGETI.

Belongs to the glutamyl-tRNA reductase family. In terms of assembly, homodimer.

It catalyses the reaction (S)-4-amino-5-oxopentanoate + tRNA(Glu) + NADP(+) = L-glutamyl-tRNA(Glu) + NADPH + H(+). Its pathway is porphyrin-containing compound metabolism; protoporphyrin-IX biosynthesis; 5-aminolevulinate from L-glutamyl-tRNA(Glu): step 1/2. In terms of biological role, catalyzes the NADPH-dependent reduction of glutamyl-tRNA(Glu) to glutamate 1-semialdehyde (GSA). This is Glutamyl-tRNA reductase from Escherichia coli O127:H6 (strain E2348/69 / EPEC).